The primary structure comprises 944 residues: Isoleucine--tRNA ligase (944 aa).

Positions 58 to 68 match the 'HIGH' region motif; it reads PYANGSIHIGH. Glu-563 contacts L-isoleucyl-5'-AMP. The 'KMSKS' region motif lies at 604–608; sequence KMSKS. Lys-607 provides a ligand contact to ATP. The Zn(2+) site is built by Cys-907, Cys-910, Cys-927, and Cys-930.

It belongs to the class-I aminoacyl-tRNA synthetase family. IleS type 1 subfamily. As to quaternary structure, monomer. Zn(2+) serves as cofactor.

It is found in the cytoplasm. It carries out the reaction tRNA(Ile) + L-isoleucine + ATP = L-isoleucyl-tRNA(Ile) + AMP + diphosphate. In terms of biological role, catalyzes the attachment of isoleucine to tRNA(Ile). As IleRS can inadvertently accommodate and process structurally similar amino acids such as valine, to avoid such errors it has two additional distinct tRNA(Ile)-dependent editing activities. One activity is designated as 'pretransfer' editing and involves the hydrolysis of activated Val-AMP. The other activity is designated 'posttransfer' editing and involves deacylation of mischarged Val-tRNA(Ile). This Salmonella typhimurium (strain LT2 / SGSC1412 / ATCC 700720) protein is Isoleucine--tRNA ligase.